The following is a 447-amino-acid chain: ATP-dependent protease ATPase subunit HslU (447 aa).

ATP contacts are provided by residues Ile17, 59-64 (GVGKTE), Asp256, Glu321, and Arg393.

Belongs to the ClpX chaperone family. HslU subfamily. As to quaternary structure, a double ring-shaped homohexamer of HslV is capped on each side by a ring-shaped HslU homohexamer. The assembly of the HslU/HslV complex is dependent on binding of ATP.

Its subcellular location is the cytoplasm. ATPase subunit of a proteasome-like degradation complex; this subunit has chaperone activity. The binding of ATP and its subsequent hydrolysis by HslU are essential for unfolding of protein substrates subsequently hydrolyzed by HslV. HslU recognizes the N-terminal part of its protein substrates and unfolds these before they are guided to HslV for hydrolysis. This is ATP-dependent protease ATPase subunit HslU from Pseudomonas entomophila (strain L48).